The sequence spans 249 residues: 2,3-bisphosphoglycerate-dependent phosphoglycerate mutase (249 aa).

Residues 8–15 (RHGESTWN), 21–22 (TG), arginine 60, 87–90 (ERHY), lysine 98, 114–115 (RR), and 183–184 (GN) each bind substrate. Residue histidine 9 is the Tele-phosphohistidine intermediate of the active site. Catalysis depends on glutamate 87, which acts as the Proton donor/acceptor.

It belongs to the phosphoglycerate mutase family. BPG-dependent PGAM subfamily. Homodimer.

The catalysed reaction is (2R)-2-phosphoglycerate = (2R)-3-phosphoglycerate. It functions in the pathway carbohydrate degradation; glycolysis; pyruvate from D-glyceraldehyde 3-phosphate: step 3/5. In terms of biological role, catalyzes the interconversion of 2-phosphoglycerate and 3-phosphoglycerate. This chain is 2,3-bisphosphoglycerate-dependent phosphoglycerate mutase, found in Burkholderia mallei (strain NCTC 10247).